The following is a 327-amino-acid chain: MEWRNHSGRVSEFVLLGFPAPAPLQVLLFALLLLAYVLVLTENTLIIMAIRNHSTLHKPMYFFLANMSFLEIWYVTVTIPKMLAGFVGSKQDHGQLISFEGCMTQLYFFLGLGCTECVLLAVMAYDRYMAICYPLHYPVIVSGRLCVQMAAGSWAGGFGISMVKVFLISGLSYCGPNIINHFFCDVSPLLNLSCTDMSTAELTDFILAIFILLGPLSVTGASYVAITGAVMHIPSAAGRYKAFSTCASHLTVVIIFYAASIFIYARPKALSAFDTNKLVSVLYAVIVPLLNPIIYCLRNQEVKRALCCTLHLYQHQDPDPKKASRNV.

The Extracellular segment spans residues 1–26 (MEWRNHSGRVSEFVLLGFPAPAPLQV). N-linked (GlcNAc...) asparagine glycosylation occurs at asparagine 5. Residues 27 to 47 (LLFALLLLAYVLVLTENTLII) form a helical membrane-spanning segment. The Cytoplasmic portion of the chain corresponds to 48 to 55 (MAIRNHST). The helical transmembrane segment at 56–76 (LHKPMYFFLANMSFLEIWYVT) threads the bilayer. Over 77 to 104 (VTIPKMLAGFVGSKQDHGQLISFEGCMT) the chain is Extracellular. A disulfide bridge links cysteine 102 with cysteine 194. The chain crosses the membrane as a helical span at residues 105-125 (QLYFFLGLGCTECVLLAVMAY). The Cytoplasmic segment spans residues 126–144 (DRYMAICYPLHYPVIVSGR). The helical transmembrane segment at 145-165 (LCVQMAAGSWAGGFGISMVKV) threads the bilayer. Residues 166–201 (FLISGLSYCGPNIINHFFCDVSPLLNLSCTDMSTAE) lie on the Extracellular side of the membrane. Asparagine 191 is a glycosylation site (N-linked (GlcNAc...) asparagine). A helical membrane pass occupies residues 202 to 222 (LTDFILAIFILLGPLSVTGAS). The Cytoplasmic portion of the chain corresponds to 223–242 (YVAITGAVMHIPSAAGRYKA). The chain crosses the membrane as a helical span at residues 243-263 (FSTCASHLTVVIIFYAASIFI). Topologically, residues 264–276 (YARPKALSAFDTN) are extracellular. A helical membrane pass occupies residues 277 to 297 (KLVSVLYAVIVPLLNPIIYCL). The Cytoplasmic portion of the chain corresponds to 298 to 327 (RNQEVKRALCCTLHLYQHQDPDPKKASRNV).

This sequence belongs to the G-protein coupled receptor 1 family.

It localises to the cell membrane. Its function is as follows. Odorant receptor. This is Olfactory receptor 6A2 (OR6A2) from Homo sapiens (Human).